Consider the following 172-residue polypeptide: Putative Dresden prostate carcinoma protein 2 (172 aa).

Residues 40–61 (QCEEEEAMTPRPTKARAPLPSA) are disordered.

In terms of tissue distribution, very high expression in prostate and prostate cancer. Faint expression in other tissues.

The polypeptide is Putative Dresden prostate carcinoma protein 2 (HMGN2P46) (Homo sapiens (Human)).